A 506-amino-acid polypeptide reads, in one-letter code: Exoglucanase (506 aa).

The signal sequence occupies residues 1–18 (MFPRSILLALSLTAVALG). The catalytic stretch occupies residues 19–450 (QQVGTNMAEN…IKFGDINSTF (432 aa)). Glu-227 functions as the Nucleophile in the catalytic mechanism. Glu-232 acts as the Proton donor in catalysis. Asn-308 carries N-linked (GlcNAc...) asparagine glycosylation. A disordered region spans residues 405–426 (ASPSQPGISRGTCSRDSGKPED). Positions 406–419 (SPSQPGISRGTCSR) are enriched in polar residues. N-linked (GlcNAc...) asparagine glycosylation is present at Asn-447. Residues 449–472 (TFNNNGGGGGNPSPTTTRPNSPAQ) form a disordered region. Residues 451–473 (NNNGGGGGNPSPTTTRPNSPAQT) form a linker region. Low complexity predominate over residues 460–470 (PSPTTTRPNSP). Residues 470–506 (PAQTMWGQCGGQGWTGPTACQSPSTCHVINDFYSQCF) enclose the CBM1 domain. Disulfide bonds link Cys-478–Cys-495 and Cys-489–Cys-505.

This sequence belongs to the glycosyl hydrolase 7 (cellulase C) family.

The catalysed reaction is Hydrolysis of (1-&gt;4)-beta-D-glucosidic linkages in cellulose and cellotetraose, releasing cellobiose from the non-reducing ends of the chains.. Its function is as follows. The biological conversion of cellulose to glucose generally requires three types of hydrolytic enzymes: (1) Endoglucanases which cut internal beta-1,4-glucosidic bonds; (2) Exocellobiohydrolases that cut the disaccharide cellobiose from the non-reducing end of the cellulose polymer chain; (3) Beta-1,4-glucosidases which hydrolyze the cellobiose and other short cello-oligosaccharides to glucose. In Agaricus bisporus (White button mushroom), this protein is Exoglucanase (cel2).